A 446-amino-acid polypeptide reads, in one-letter code: Enolase 1 (446 aa).

Positions 164 and 173 each coordinate substrate. The active-site Proton donor is Glu216. 3 residues coordinate Mg(2+): Asp251, Glu302, and Asp329. Substrate-binding residues include Glu302 and Asp329. Lys354 (proton acceptor) is an active-site residue. Substrate-binding positions include 381–384 (SHRS) and Lys405.

This sequence belongs to the enolase family. As to quaternary structure, homodimer. Mg(2+) is required as a cofactor.

It is found in the cytoplasm. The catalysed reaction is (2R)-2-phosphoglycerate = phosphoenolpyruvate + H2O. It functions in the pathway carbohydrate degradation; glycolysis; pyruvate from D-glyceraldehyde 3-phosphate: step 4/5. The polypeptide is Enolase 1 (ENO1) (Zea mays (Maize)).